We begin with the raw amino-acid sequence, 341 residues long: Phenylalanine--tRNA ligase alpha subunit (341 aa).

Glutamate 256 serves as a coordination point for Mg(2+).

This sequence belongs to the class-II aminoacyl-tRNA synthetase family. Phe-tRNA synthetase alpha subunit type 1 subfamily. In terms of assembly, tetramer of two alpha and two beta subunits. Mg(2+) is required as a cofactor.

It is found in the cytoplasm. The catalysed reaction is tRNA(Phe) + L-phenylalanine + ATP = L-phenylalanyl-tRNA(Phe) + AMP + diphosphate + H(+). The sequence is that of Phenylalanine--tRNA ligase alpha subunit from Leptospira biflexa serovar Patoc (strain Patoc 1 / Ames).